Here is a 154-residue protein sequence, read N- to C-terminus: Interleukin-2 (154 aa).

Positions 1–20 (MYRMQLLSCIALSLALITNS) are cleaved as a signal peptide. T23 carries O-linked (GalNAc...) threonine glycosylation. A disulfide bridge links C78 with C126.

Belongs to the IL-2 family.

Its subcellular location is the secreted. In terms of biological role, cytokine produced by activated CD4-positive helper T-cells and to a lesser extend activated CD8-positive T-cells and natural killer (NK) cells that plays pivotal roles in the immune response and tolerance. Binds to a receptor complex composed of either the high-affinity trimeric IL-2R (IL2RA/CD25, IL2RB/CD122 and IL2RG/CD132) or the low-affinity dimeric IL-2R (IL2RB and IL2RG). Interaction with the receptor leads to oligomerization and conformation changes in the IL-2R subunits resulting in downstream signaling starting with phosphorylation of JAK1 and JAK3. In turn, JAK1 and JAK3 phosphorylate the receptor to form a docking site leading to the phosphorylation of several substrates including STAT5. This process leads to activation of several pathways including STAT, phosphoinositide-3-kinase/PI3K and mitogen-activated protein kinase/MAPK pathways. Functions as a T-cell growth factor and can increase NK-cell cytolytic activity as well. Promotes strong proliferation of activated B-cells and subsequently immunoglobulin production. Plays a pivotal role in regulating the adaptive immune system by controlling the survival and proliferation of regulatory T-cells, which are required for the maintenance of immune tolerance. Moreover, participates in the differentiation and homeostasis of effector T-cell subsets, including Th1, Th2, Th17 as well as memory CD8-positive T-cells. The chain is Interleukin-2 (IL2) from Saimiri sciureus (Common squirrel monkey).